Here is a 225-residue protein sequence, read N- to C-terminus: Urease accessory protein UreG (225 aa).

25 to 32 (GPVGAGKT) provides a ligand contact to GTP.

It belongs to the SIMIBI class G3E GTPase family. UreG subfamily. Homodimer. UreD, UreF and UreG form a complex that acts as a GTP-hydrolysis-dependent molecular chaperone, activating the urease apoprotein by helping to assemble the nickel containing metallocenter of UreC. The UreE protein probably delivers the nickel.

The protein localises to the cytoplasm. In terms of biological role, facilitates the functional incorporation of the urease nickel metallocenter. This process requires GTP hydrolysis, probably effectuated by UreG. The polypeptide is Urease accessory protein UreG (Haemophilus influenzae (strain ATCC 51907 / DSM 11121 / KW20 / Rd)).